Reading from the N-terminus, the 263-residue chain is MASSSSVLLVVVLFAVFLGSAYGIPKVPPGPNITATYGDKWLDAKSTWYGKPTGAGPKDNGGACGYKDVDKPPFSGMTGCGNTPIFKSGRGCGSCFEIKCTKPEACSGEPVVVHITDDNEEPIAPYHFDLSGHAFGAMAKKGDEQKLRSAGELELQFRRVKCKYPEGTKVTFHVEKGSNPNYLALLVKYVNGDGDVVAVDIKEKGKDKWIELKESWGAIWRIDTPDKLTGPFTVRYTTEGGTKTEAEDVIPEGWKADTSYESK.

Positions 1–23 (MASSSSVLLVVVLFAVFLGSAYG) are cleaved as a signal peptide. An N-linked (GlcNAc...) asparagine glycan is attached at Asn32. Positions 61-167 (GGACGYKDVD…RRVKCKYPEG (107 aa)) constitute an Expansin-like EG45 domain. 3 disulfides stabilise this stretch: Cys64-Cys92, Cys95-Cys162, and Cys100-Cys106. The Expansin-like CBD domain maps to 181–262 (NYLALLVKYV…GWKADTSYES (82 aa)).

It belongs to the expansin family. Expansin B subfamily. As to quaternary structure, homodimer.

The protein localises to the secreted. This Phleum pratense (Common timothy) protein is Pollen allergen Phl p 1 (PHLPI).